The following is a 429-amino-acid chain: 5-methylthioadenosine/S-adenosylhomocysteine deaminase (429 aa).

The Zn(2+) site is built by His-65 and His-67. Glu-94 and His-182 together coordinate substrate. Position 209 (His-209) interacts with Zn(2+). Residues Glu-212 and Asp-297 each contribute to the substrate site. Asp-297 provides a ligand contact to Zn(2+).

This sequence belongs to the metallo-dependent hydrolases superfamily. MTA/SAH deaminase family. It depends on Zn(2+) as a cofactor.

It catalyses the reaction S-adenosyl-L-homocysteine + H2O + H(+) = S-inosyl-L-homocysteine + NH4(+). The enzyme catalyses S-methyl-5'-thioadenosine + H2O + H(+) = S-methyl-5'-thioinosine + NH4(+). In terms of biological role, catalyzes the deamination of 5-methylthioadenosine and S-adenosyl-L-homocysteine into 5-methylthioinosine and S-inosyl-L-homocysteine, respectively. Is also able to deaminate adenosine. The chain is 5-methylthioadenosine/S-adenosylhomocysteine deaminase from Clostridium tetani (strain Massachusetts / E88).